We begin with the raw amino-acid sequence, 402 residues long: MKRLWQHCHAATLKGGKYSIVEDAALVTDGPLIHWIGPRAELPPDDYAERIDLDGAWLTPGLIDCHTHAVFGGNRSGEFEQRLEGVSYAEIAAAGGGIASTVRATREASEEELLASARKRLDPLLRDGVTALEIKSGYGLDLASERKMLRVIRRLGERLPATVRSTCLAAHALPPEYAGRADDYIEHICSTMLPALAGEGLVDAVDAFCEHLAFSPAQVERVFIAARELGLPVKLHAEQLSSLHGSSLAARYRALSADHLEYMTEDDARSMGEAGTVAVLLPGAFYLLRETQLPPIDALRRHGVAMAIASDLNPGTSPALSLRLMLNMACTLFRLTPEEALAGVTLHAARALGLEARHGSLEVGKLADFVAWDIERPAELAYWLGGDLPKRVIRHAEEVYRG.

Residues histidine 66 and histidine 68 each coordinate Fe(3+). Zn(2+) contacts are provided by histidine 66 and histidine 68. The 4-imidazolone-5-propanoate site is built by arginine 75, tyrosine 138, and histidine 171. Tyrosine 138 is a binding site for N-formimidoyl-L-glutamate. Residue histidine 236 coordinates Fe(3+). Histidine 236 provides a ligand contact to Zn(2+). Glutamine 239 is a 4-imidazolone-5-propanoate binding site. Position 311 (aspartate 311) interacts with Fe(3+). Aspartate 311 is a Zn(2+) binding site. The N-formimidoyl-L-glutamate site is built by asparagine 313 and glycine 315. Threonine 316 contacts 4-imidazolone-5-propanoate.

The protein belongs to the metallo-dependent hydrolases superfamily. HutI family. It depends on Zn(2+) as a cofactor. Requires Fe(3+) as cofactor.

The protein resides in the cytoplasm. It carries out the reaction 4-imidazolone-5-propanoate + H2O = N-formimidoyl-L-glutamate. The protein operates within amino-acid degradation; L-histidine degradation into L-glutamate; N-formimidoyl-L-glutamate from L-histidine: step 3/3. In terms of biological role, catalyzes the hydrolytic cleavage of the carbon-nitrogen bond in imidazolone-5-propanoate to yield N-formimidoyl-L-glutamate. It is the third step in the universal histidine degradation pathway. The chain is Imidazolonepropionase from Pseudomonas aeruginosa (strain UCBPP-PA14).